Reading from the N-terminus, the 1345-residue chain is MEQGEASPPVPAEHEAKCDTSNNEEEGELFDFDSGDEVPEADRQVPSADDRTRGAEAGGADENTCPAGNGTGAEPAPEAEPAKLVVPTKVNPYSVIDITPLQEDQPSSPDANTEEEGVGLRVPSGYSVPVPCGYAVPSNLPLLLPAYSSPVIIRAESVEEEEAAETVGDGQCNSLSSEDLPHSSEQGSQEGSALARWAADPANTAWMENPEEAIYDDVPRENSDSEPDEMIYDDVENGEEGGNSSPEYGWSSSEFESYEEPSDSEGKNGIPRSFLRSSHKKQLSHDLTRFKAHCEEKMRGLVASTVGAMEIQQAKQRQERKMQKLMKAAKEGTKDGLEKTKAAVKRGGSFIRTRSLVSQDHRCYFEEEQNLFIDVDCKHPEAVLTPMPEGLSQQQVVRRYILGSIVESEKNYVDALRRILEQYEKPLSEMEPRLLSDRKLRMVFYRVKEILQCHSMFQIALASRVSEWDVVETIGDVFVASFSKSMVLDAYSEYVNNFSTAVAVLKKTCATKPAFLEFLKLSQDSSPDRVTLHSLMMRPIQRFPQFILLLQDMLKNTAKGHPDRLPLQMALTELETLAEKLNERKRDADQRCEIKQIAKAINERYLNKLLSSGNRYLVRSDDVIETVYNDRGEIVKTKQRRIFMLNDVLMCATASSRNSHESHAVMSQRYLLKWSVPLGHVDVIQYNGGSGAGEHCRHHAAHSPESLAVVANAKPHKVYMGPGQLYQDLQNLLHDLNVVGQISQLIGNLRGSYQNLNQSVAHDWTSGLQRLILRKEDAIRAADRCRIQLQLPGKQDKSGRPTFFTAVFNTLTPAIKESWVSSLQMAKLALEEENHMGWFCVDDDGNLAKKETHPLLVGHMPVMVAKQPEFKIECAAYNPEPYLSNESQPASPSTARGFLWIGSCSNQMGQVAIVSFQGSNPKVIECFNVESRILCMVYIPAEESKPQETTETKDPEATASRAPHVPTICLGTEEGSISIYKSSQGCKKVRLQHFYAPDKSTVMSLACSPQGLYAGLVNGSVASYTKAPDGSWNSEPQQVIKLGVLPVRSLLLVEGALWAASGGQVFMASVETHTIENQLEAHQDEGMVISHMAVAGVGIWIAFTSGSTLRLFHTETLKHLQDVNIDAPVHSMLPGHQRLSVTSLLVCHGLLMVGTSLGVVVALPVPRLQGIPKVTGRGMVSYHAHNGPVKFIVSATAFQNKDRARDSPRSGSELQDEDPKDLLCSEEGPSCPGQPDTYTSVWLGDSLGLPTQKNDLSSSSGSLNLSHGSSSLEHRSVDSSLCDLLRDPSASPRSRPQGSRRARASSALVVCGGQGHRRVHRKARQPSQEDLVSSVMVWQIPLLGM.

2 disordered regions span residues 1 to 84 and 99 to 120; these read MEQG…PAKL and TPLQEDQPSSPDANTEEEGVGL. The span at 22–39 shows a compositional bias: acidic residues; sequence NNEEEGELFDFDSGDEVP. Over residues 40–54 the composition is skewed to basic and acidic residues; that stretch reads EADRQVPSADDRTRG. Positions 102-111 are enriched in polar residues; sequence QEDQPSSPDA. Phosphoserine is present on S157. 2 disordered regions span residues 158–195 and 207–273; these read VEEEEAAETVGDGQCNSLSSEDLPHSSEQGSQEGSALA and MENP…IPRS. Over residues 171–191 the composition is skewed to polar residues; the sequence is QCNSLSSEDLPHSSEQGSQEG. The span at 224 to 239 shows a compositional bias: acidic residues; that stretch reads DSEPDEMIYDDVENGE. Over residues 242 to 255 the composition is skewed to low complexity; the sequence is GNSSPEYGWSSSEF. Positions 307-335 form a coiled coil; sequence GAMEIQQAKQRQERKMQKLMKAAKEGTKD. S355 bears the Phosphoserine mark. A DH domain is found at 397 to 584; sequence VRRYILGSIV…ETLAEKLNER (188 aa). Disordered regions lie at residues 1202-1237 and 1253-1306; these read DRARDSPRSGSELQDEDPKDLLCSEEGPSCPGQPDT and KNDL…RASS. Positions 1256-1271 are enriched in low complexity; sequence LSSSSGSLNLSHGSSS. S1262 bears the Phosphoserine mark. Q1314 carries the N5-methylglutamine modification.

Post-translationally, methylated at Gln-1314 by N6AMT1. As to expression, ubiquitously expressed.

In terms of biological role, may play a role in developmental myelination of peripheral nerves. This is Rho guanine nucleotide exchange factor 10 (Arhgef10) from Mus musculus (Mouse).